The following is a 213-amino-acid chain: StAR-related lipid transfer protein 5 (213 aa).

The START domain occupies 1–213 (MDLATAAQVS…LEKAVKKFFG (213 aa)).

Its function is as follows. May be involved in the intracellular transport of sterols or other lipids. May bind cholesterol or other sterols. The protein is StAR-related lipid transfer protein 5 (STARD5) of Bos taurus (Bovine).